A 504-amino-acid chain; its full sequence is Putative ribose/galactose/methyl galactoside import ATP-binding protein (504 aa).

ABC transporter domains are found at residues 5–242 and 252–497; these read ISVK…GRNL and TSAN…TRRE. 37-44 contributes to the ATP binding site; that stretch reads GENGAGKS.

It belongs to the ABC transporter superfamily. Carbohydrate importer 2 (CUT2) (TC 3.A.1.2) family.

It is found in the cell inner membrane. It catalyses the reaction D-ribose(out) + ATP + H2O = D-ribose(in) + ADP + phosphate + H(+). The enzyme catalyses D-galactose(out) + ATP + H2O = D-galactose(in) + ADP + phosphate + H(+). In terms of biological role, part of an ABC transporter complex involved in carbohydrate import. Could be involved in ribose, galactose and/or methyl galactoside import. Responsible for energy coupling to the transport system. This is Putative ribose/galactose/methyl galactoside import ATP-binding protein from Albidiferax ferrireducens (strain ATCC BAA-621 / DSM 15236 / T118) (Rhodoferax ferrireducens).